Reading from the N-terminus, the 466-residue chain is Citrate synthase, mitochondrial (466 aa).

The transit peptide at 1–27 (MALLTAAARLFGAKNASCLVLAARHAS) directs the protein to the mitochondrion. The SIFI-degron motif lies at 2-21 (ALLTAAARLFGAKNASCLVL). An N6-succinyllysine modification is found at K57. At K76 the chain carries N6-acetyllysine; alternate. K76 bears the N6-succinyllysine; alternate mark. Residues K103 and K193 each carry the N6-succinyllysine modification. Phosphoserine is present on S226. Residue H301 is part of the active site. An N6-acetyllysine; alternate mark is found at K321 and K327. Residues K321 and K327 each carry the N6-succinyllysine; alternate modification. H347 is a catalytic residue. R356 is an oxaloacetate binding site. K375 carries the post-translational modification N6-acetyllysine; alternate. At K375 the chain carries N6-succinyllysine; alternate. K382 carries the N6-acetyllysine modification. K393 carries the post-translational modification N6-acetyllysine; alternate. K393 is modified (N6-succinyllysine; alternate). K395 is subject to N6,N6,N6-trimethyllysine. The active site involves D402. Oxaloacetate is bound by residues R428 and R448. Residue K450 is modified to N6-succinyllysine. K459 carries the N6-acetyllysine; alternate modification. K459 is modified (N6-succinyllysine; alternate).

The protein belongs to the citrate synthase family. In terms of assembly, homodimer. Post-translationally, methylated. Trimethylation at Lys-395 by CSKMT decreases citrate synthase activity. In terms of processing, in response to mitochondrial stress, the precursor protein is ubiquitinated by the SIFI complex in the cytoplasm before mitochondrial import, leading to its degradation. Within the SIFI complex, UBR4 initiates ubiquitin chain that are further elongated or branched by KCMF1.

It is found in the mitochondrion matrix. It carries out the reaction oxaloacetate + acetyl-CoA + H2O = citrate + CoA + H(+). It participates in carbohydrate metabolism; tricarboxylic acid cycle; isocitrate from oxaloacetate: step 1/2. In terms of biological role, key enzyme of the Krebs tricarboxylic acid cycle which catalyzes the synthesis of citrate from acetyl coenzyme A and oxaloacetate. This Bos taurus (Bovine) protein is Citrate synthase, mitochondrial (CS).